Reading from the N-terminus, the 282-residue chain is Pseudokinase OPG198 (282 aa).

ATP-binding residues include Met1 and Lys30. The Protein kinase domain occupies 1 to 282 (MESFKYCFDN…DRLRRLFIQD (282 aa)).

The protein belongs to the protein kinase superfamily. Ser/Thr protein kinase family. Poxviruses subfamily. As to quaternary structure, interacts with B1/VPK1. Interacts with host VRK1. Interacts with host VRK2.

The protein localises to the host nucleus. Its activity is regulated as follows. Both catalytically active kinases B1/VPK1 and host VRK2 repress B12 inhibitory activity in a B1/VPK1 deletion mutant strain. Its function is as follows. Pseudokinase that plays a role in viral DNA replication repression by activating the antiviral protein BANF1 and inhibiting the activity of host VRK1, a cellular modulator of BANF1. This Cynomys gunnisoni (Gunnison's prairie dog) protein is Pseudokinase OPG198 (OPG198).